Consider the following 159-residue polypeptide: SsrA-binding protein (159 aa).

It belongs to the SmpB family.

It localises to the cytoplasm. Its function is as follows. Required for rescue of stalled ribosomes mediated by trans-translation. Binds to transfer-messenger RNA (tmRNA), required for stable association of tmRNA with ribosomes. tmRNA and SmpB together mimic tRNA shape, replacing the anticodon stem-loop with SmpB. tmRNA is encoded by the ssrA gene; the 2 termini fold to resemble tRNA(Ala) and it encodes a 'tag peptide', a short internal open reading frame. During trans-translation Ala-aminoacylated tmRNA acts like a tRNA, entering the A-site of stalled ribosomes, displacing the stalled mRNA. The ribosome then switches to translate the ORF on the tmRNA; the nascent peptide is terminated with the 'tag peptide' encoded by the tmRNA and targeted for degradation. The ribosome is freed to recommence translation, which seems to be the essential function of trans-translation. In Coxiella burnetii (strain CbuG_Q212) (Coxiella burnetii (strain Q212)), this protein is SsrA-binding protein.